Here is a 77-residue protein sequence, read N- to C-terminus: Dermatoxin-DA1 (77 aa).

Residues 1-22 (MAFLKKSLFLVLFLGLVPLFLC) form the signal peptide. A propeptide spanning residues 23 to 42 (ENEKREGENEKEENDDQSEE) is cleaved from the precursor. Residue Lys76 is modified to Lysine amide.

It belongs to the frog skin active peptide (FSAP) family. Dermatoxin subfamily. Expressed by the skin glands.

It is found in the secreted. Its function is as follows. Possesses a potent antimicrobial activity against Gram-positive and Gram-negative bacteria. Probably acts by disturbing membrane functions with its amphipathic structure. The polypeptide is Dermatoxin-DA1 (Agalychnis dacnicolor (Giant Mexican leaf frog)).